Here is a 120-residue protein sequence, read N- to C-terminus: Large ribosomal subunit protein uL18c (120 aa).

Belongs to the universal ribosomal protein uL18 family. In terms of assembly, part of the 50S ribosomal subunit; contacts the 5S rRNA.

The protein localises to the plastid. Its subcellular location is the chloroplast. Its function is as follows. Binds 5S rRNA, forms part of the central protuberance of the 50S subunit. The polypeptide is Large ribosomal subunit protein uL18c (rpl18) (Pyropia yezoensis (Susabi-nori)).